We begin with the raw amino-acid sequence, 491 residues long: MNTQQLAKLRSIVPEMRRVRHIHFVGIGGAGMGGIAEVLANEGYQISGSDLAPNPVTQQLMNLGATIYFNHRPENVRDASVVVVSSAISADNPEIVAAHEARIPVIRRAEMLAELMRFRHGIAIAGTHGKTTTTAMVSSIYAEAGLDPTFVNGGLVKAAGVHARLGHGRYLIAEADESDASFLHLQPMVAIVTNIEADHMDTYQGDFENLKQTFINFLHNLPFYGRAVMCVDDPVIRELLPRVGRQTTTYGFSEDADVRVEDYQQIGPQGHFTLLRQDKEPMRVTLNAPGRHNALNAAAAVAVATEEGIDDEAILRALESFQGTGRRFDFLGEFPLEPVNGKSGTAMLVDDYGHHPTEVDATIKAARAGWPDKNLVMLFQPHRFTRTRDLYDDFANVLTQVDTLLMLEVYPAGEAPIPGADSRSLCRTIRGRGKIDPILVPDPAQVAEMLAPVLTGNDLILVQGAGNIGKIARSLAEIKLKPQTPEEAQHD.

ATP is bound at residue 126 to 132; the sequence is GTHGKTT.

It belongs to the MurCDEF family.

It localises to the cytoplasm. The enzyme catalyses UDP-N-acetyl-alpha-D-muramate + L-alanine + ATP = UDP-N-acetyl-alpha-D-muramoyl-L-alanine + ADP + phosphate + H(+). It participates in cell wall biogenesis; peptidoglycan biosynthesis. Cell wall formation. The polypeptide is UDP-N-acetylmuramate--L-alanine ligase (Escherichia coli O7:K1 (strain IAI39 / ExPEC)).